The primary structure comprises 532 residues: Variant surface glycoprotein ILTAT 1.23 (532 aa).

An N-terminal signal peptide occupies residues 1–23 (MFKNINAAVLLLILSTRNDYANA). Asn66 is a glycosylation site (N-linked (GlcNAc...) asparagine). Disordered regions lie at residues 79 to 107 (APKKGKQENSNNADGAPRSQEKTHARNHA) and 408 to 504 (MQAG…DQDK). A glycan (N-linked (GlcNAc...) asparagine) is linked at Asn419. The span at 427-445 (CKWEEKDGKDGKCVADDSK) shows a compositional bias: basic and acidic residues. Residues 450-470 (GNAPAGAGDGTAGTTTTPNCA) show a composition bias toward low complexity. Composition is skewed to basic and acidic residues over residues 472–484 (HTDKTKCEEENKG) and 494–504 (KGKEGESDQDK). N-linked (GlcNAc...) asparagine glycosylation occurs at Asn509. Asn509 is lipidated: GPI-anchor amidated asparagine. Positions 510 to 532 (GSFLAKKKFALSVVSAAFTALLF) are cleaved as a propeptide — removed in mature form.

Its subcellular location is the cell membrane. Functionally, VSG forms a coat on the surface of the parasite. The trypanosome evades the immune response of the host by expressing a series of antigenically distinct VSGs from an estimated 1000 VSG genes. This chain is Variant surface glycoprotein ILTAT 1.23, found in Trypanosoma brucei brucei.